We begin with the raw amino-acid sequence, 419 residues long: Methionine aminopeptidase 2 (419 aa).

A disordered region spans residues Met-1 to Pro-69. A compositionally biased stretch (basic and acidic residues) spans Val-11–Ser-29. A compositionally biased stretch (acidic residues) spans Glu-30–Ser-41. The span at Lys-48–Ile-61 shows a compositional bias: basic residues. Substrate is bound at residue His-172. Residues Asp-192, Asp-203, and His-272 each contribute to the a divalent metal cation site. A substrate-binding site is contributed by His-280. 2 residues coordinate a divalent metal cation: Glu-305 and Glu-400.

The protein belongs to the peptidase M24A family. Methionine aminopeptidase eukaryotic type 2 subfamily. It depends on Co(2+) as a cofactor. The cofactor is Zn(2+). Requires Mn(2+) as cofactor. Fe(2+) is required as a cofactor.

It is found in the cytoplasm. It carries out the reaction Release of N-terminal amino acids, preferentially methionine, from peptides and arylamides.. Functionally, cotranslationally removes the N-terminal methionine from nascent proteins. The N-terminal methionine is often cleaved when the second residue in the primary sequence is small and uncharged (Met-Ala-, Cys, Gly, Pro, Ser, Thr, or Val). This is Methionine aminopeptidase 2 from Debaryomyces hansenii (strain ATCC 36239 / CBS 767 / BCRC 21394 / JCM 1990 / NBRC 0083 / IGC 2968) (Yeast).